The sequence spans 65 residues: Large ribosomal subunit protein bL35 (65 aa).

Positions 1-23 (MPKMKTHRGAAKRFKKTGTGKLK) are disordered.

It belongs to the bacterial ribosomal protein bL35 family.

The sequence is that of Large ribosomal subunit protein bL35 from Clostridium perfringens (strain ATCC 13124 / DSM 756 / JCM 1290 / NCIMB 6125 / NCTC 8237 / Type A).